The sequence spans 63 residues: MLNLHLLYTLEITYSVQSRIVIYIKYYYSVSYMASLLHSLSSRPIIVYYSLYCTSPSIHNGML.

This is an uncharacterized protein from Thermoproteus tenax virus 1 (strain KRA1) (TTV1).